The primary structure comprises 409 residues: MHELVLSGRFVLNGEIVGGSIGIDNGLITEISRRDIKGEEVIAFKSEIILPGLIDTHVHLRDFEQKEKETVESGTKAALHGGITAVFDMPNTKPPIMDVKTFEKRLSILEKHAYSDYAASFLLAGNCGEASRARADFYKIFMGASTGGIFSENFESDYSCAPGIVSVHAEDPETIRENPERPPEAEIRAIKKALTAAEKLRKPLNVCHVSTVGGIEAIIKKNLPWVSFEVTPHHLFLTSKDFERNPLLKVYPPLRSEEHRKALWENFSRIPIIASDHAPHTIEDKEAGAAGIPGLETEVALLLDAANRGLITVFDIVEKMHDNPVRFFGIKGRDFSLGNEATFTIIDPKKEWKVKPEEFYTKAKWSPWEGKKLKGKVVMTVIRGMVVMEGDEIIEEPKGVRLDVQGGNH.

Residues His57 and His59 each coordinate Zn(2+). Residues 59-61 (HLR) and Asn91 contribute to the substrate site. Lys139, His168, His208, and Asp276 together coordinate Zn(2+). The residue at position 139 (Lys139) is an N6-carboxylysine. Residue Asp276 is part of the active site. Residues His280 and 290–291 (AG) contribute to the substrate site.

The protein belongs to the metallo-dependent hydrolases superfamily. DHOase family. Class I DHOase subfamily. Zn(2+) is required as a cofactor.

The enzyme catalyses (S)-dihydroorotate + H2O = N-carbamoyl-L-aspartate + H(+). It participates in pyrimidine metabolism; UMP biosynthesis via de novo pathway; (S)-dihydroorotate from bicarbonate: step 3/3. In terms of biological role, catalyzes the reversible cyclization of carbamoyl aspartate to dihydroorotate. The chain is Dihydroorotase from Thermococcus kodakarensis (strain ATCC BAA-918 / JCM 12380 / KOD1) (Pyrococcus kodakaraensis (strain KOD1)).